The following is a 376-amino-acid chain: Protein RecA (376 aa).

Residue 79–86 (GPESSGKT) participates in ATP binding. Residues 357–376 (AAARAATDKPVETKGANAAA) are disordered.

This sequence belongs to the RecA family.

It localises to the cytoplasm. Functionally, can catalyze the hydrolysis of ATP in the presence of single-stranded DNA, the ATP-dependent uptake of single-stranded DNA by duplex DNA, and the ATP-dependent hybridization of homologous single-stranded DNAs. It interacts with LexA causing its activation and leading to its autocatalytic cleavage. The sequence is that of Protein RecA from Synechococcus sp. (strain CC9902).